The chain runs to 201 residues: Coiled-coil domain-containing protein 195 (201 aa).

Residues 4 to 38 (DIQLMRLIQEMRAEIHKLEKENQALRMKLTASSQR) adopt a coiled-coil conformation. Disordered stretches follow at residues 28-72 (LRMK…DAAP) and 179-201 (SKNS…IIAE). Positions 179–188 (SKNSSSLKHS) are enriched in low complexity. A compositionally biased stretch (polar residues) spans 189 to 201 (PNQATNQLSIIAE).

The sequence is that of Coiled-coil domain-containing protein 195 from Homo sapiens (Human).